We begin with the raw amino-acid sequence, 265 residues long: 3-methyl-2-oxobutanoate hydroxymethyltransferase (265 aa).

Residues Asp45 and Asp84 each contribute to the Mg(2+) site. Residues 45-46, Asp84, and Lys112 each bind 3-methyl-2-oxobutanoate; that span reads DS. Glu114 serves as a coordination point for Mg(2+). The active-site Proton acceptor is Glu181.

It belongs to the PanB family. In terms of assembly, homodecamer; pentamer of dimers. It depends on Mg(2+) as a cofactor.

It is found in the cytoplasm. It carries out the reaction 3-methyl-2-oxobutanoate + (6R)-5,10-methylene-5,6,7,8-tetrahydrofolate + H2O = 2-dehydropantoate + (6S)-5,6,7,8-tetrahydrofolate. The protein operates within cofactor biosynthesis; (R)-pantothenate biosynthesis; (R)-pantoate from 3-methyl-2-oxobutanoate: step 1/2. Functionally, catalyzes the reversible reaction in which hydroxymethyl group from 5,10-methylenetetrahydrofolate is transferred onto alpha-ketoisovalerate to form ketopantoate. The sequence is that of 3-methyl-2-oxobutanoate hydroxymethyltransferase from Yersinia pseudotuberculosis serotype IB (strain PB1/+).